The following is a 300-amino-acid chain: U6 snRNA methylphosphate capping enzyme Amus (300 aa).

Over residues methionine 1–threonine 12 the composition is skewed to polar residues. Disordered stretches follow at residues methionine 1–lysine 21 and valine 34–methionine 68. Basic and acidic residues predominate over residues valine 34 to serine 44. One can recognise a Bin3-type SAM domain in the interval aspartate 95 to serine 300. The S-adenosyl-L-methionine site is built by asparagine 119 and aspartate 140.

Belongs to the methyltransferase superfamily.

The protein resides in the nucleus. In terms of biological role, probable S-adenosyl-L-methionine-dependent methyltransferase that binds and stabilizes U6 snRNA, probably by adding a methylphosphate cap at its 5'-end. Required for U6 stability, but not stability of 7SK snRNAs, other miRNAs or tRNAs. U6 stabilization is required for efficient pre-mRNA splicing. Essential for organismal and germline development. The sequence is that of U6 snRNA methylphosphate capping enzyme Amus from Drosophila melanogaster (Fruit fly).